The following is a 59-amino-acid chain: MSKTEVRKGETIEDTLRRFKRTVSKDGTLVEARKREYYIKPGVDRRMKAKAAKTKKKKR.

It belongs to the bacterial ribosomal protein bS21 family.

The polypeptide is Small ribosomal subunit protein bS21 (Acholeplasma laidlawii (strain PG-8A)).